The chain runs to 132 residues: Phosphoribosyl-AMP cyclohydrolase (132 aa).

Aspartate 82 lines the Mg(2+) pocket. Cysteine 83 contributes to the Zn(2+) binding site. The Mg(2+) site is built by aspartate 84 and aspartate 86. Zn(2+)-binding residues include cysteine 100 and cysteine 107.

Belongs to the PRA-CH family. Homodimer. Mg(2+) serves as cofactor. It depends on Zn(2+) as a cofactor.

It is found in the cytoplasm. It carries out the reaction 1-(5-phospho-beta-D-ribosyl)-5'-AMP + H2O = 1-(5-phospho-beta-D-ribosyl)-5-[(5-phospho-beta-D-ribosylamino)methylideneamino]imidazole-4-carboxamide. The protein operates within amino-acid biosynthesis; L-histidine biosynthesis; L-histidine from 5-phospho-alpha-D-ribose 1-diphosphate: step 3/9. Catalyzes the hydrolysis of the adenine ring of phosphoribosyl-AMP. The chain is Phosphoribosyl-AMP cyclohydrolase from Dechloromonas aromatica (strain RCB).